We begin with the raw amino-acid sequence, 270 residues long: Protein ABHD14A (270 aa).

Residues 9–29 (LVVLGLVLLATVLLYLLLPSM) traverse the membrane as a helical; Signal-anchor for type II membrane protein segment. N61 is a glycosylation site (N-linked (GlcNAc...) asparagine). Active-site charge relay system residues include S170 and D221. Residue N237 is glycosylated (N-linked (GlcNAc...) asparagine). H248 functions as the Charge relay system in the catalytic mechanism.

It belongs to the AB hydrolase superfamily. ABHD14 family.

It localises to the cytoplasm. Its subcellular location is the membrane. Functionally, possible role in granule neuron development. The protein is Protein ABHD14A of Danio rerio (Zebrafish).